The chain runs to 256 residues: Thiazole synthase (256 aa).

The active-site Schiff-base intermediate with DXP is the lysine 95. 1-deoxy-D-xylulose 5-phosphate is bound by residues glycine 156, 182-183, and 204-205; these read AG and NT.

This sequence belongs to the ThiG family. In terms of assembly, homotetramer. Forms heterodimers with either ThiH or ThiS.

It is found in the cytoplasm. The catalysed reaction is [ThiS sulfur-carrier protein]-C-terminal-Gly-aminoethanethioate + 2-iminoacetate + 1-deoxy-D-xylulose 5-phosphate = [ThiS sulfur-carrier protein]-C-terminal Gly-Gly + 2-[(2R,5Z)-2-carboxy-4-methylthiazol-5(2H)-ylidene]ethyl phosphate + 2 H2O + H(+). The protein operates within cofactor biosynthesis; thiamine diphosphate biosynthesis. In terms of biological role, catalyzes the rearrangement of 1-deoxy-D-xylulose 5-phosphate (DXP) to produce the thiazole phosphate moiety of thiamine. Sulfur is provided by the thiocarboxylate moiety of the carrier protein ThiS. In vitro, sulfur can be provided by H(2)S. In Salmonella enteritidis PT4 (strain P125109), this protein is Thiazole synthase.